We begin with the raw amino-acid sequence, 388 residues long: Dual-specificity RNA methyltransferase RlmN (388 aa).

Glu-109 (proton acceptor) is an active-site residue. One can recognise a Radical SAM core domain in the interval 115–354 (EEDRATLCVS…TIVRKTRGDD (240 aa)). Cys-122 and Cys-359 form a disulfide bridge. 3 residues coordinate [4Fe-4S] cluster: Cys-129, Cys-133, and Cys-136. S-adenosyl-L-methionine contacts are provided by residues 183–184 (GE), Ser-215, 237–239 (SLH), and Asn-316. Cys-359 serves as the catalytic S-methylcysteine intermediate.

It belongs to the radical SAM superfamily. RlmN family. [4Fe-4S] cluster is required as a cofactor.

The protein localises to the cytoplasm. The enzyme catalyses adenosine(2503) in 23S rRNA + 2 reduced [2Fe-2S]-[ferredoxin] + 2 S-adenosyl-L-methionine = 2-methyladenosine(2503) in 23S rRNA + 5'-deoxyadenosine + L-methionine + 2 oxidized [2Fe-2S]-[ferredoxin] + S-adenosyl-L-homocysteine. It carries out the reaction adenosine(37) in tRNA + 2 reduced [2Fe-2S]-[ferredoxin] + 2 S-adenosyl-L-methionine = 2-methyladenosine(37) in tRNA + 5'-deoxyadenosine + L-methionine + 2 oxidized [2Fe-2S]-[ferredoxin] + S-adenosyl-L-homocysteine. Its function is as follows. Specifically methylates position 2 of adenine 2503 in 23S rRNA and position 2 of adenine 37 in tRNAs. m2A2503 modification seems to play a crucial role in the proofreading step occurring at the peptidyl transferase center and thus would serve to optimize ribosomal fidelity. The sequence is that of Dual-specificity RNA methyltransferase RlmN from Enterobacter sp. (strain 638).